The sequence spans 91 residues: Small ribosomal subunit protein uS19 (91 aa).

It belongs to the universal ribosomal protein uS19 family.

Its function is as follows. Protein S19 forms a complex with S13 that binds strongly to the 16S ribosomal RNA. The sequence is that of Small ribosomal subunit protein uS19 from Chromohalobacter salexigens (strain ATCC BAA-138 / DSM 3043 / CIP 106854 / NCIMB 13768 / 1H11).